The chain runs to 305 residues: tRNA N6-adenosine threonylcarbamoyltransferase (305 aa).

2 residues coordinate Fe cation: His-108 and His-112. Substrate is bound by residues 130 to 134, Asp-163, Gly-176, Asp-180, and Asn-264; that span reads VVSGG. Asp-288 contacts Fe cation.

The protein belongs to the KAE1 / TsaD family. Fe(2+) is required as a cofactor.

Its subcellular location is the cytoplasm. The enzyme catalyses L-threonylcarbamoyladenylate + adenosine(37) in tRNA = N(6)-L-threonylcarbamoyladenosine(37) in tRNA + AMP + H(+). Required for the formation of a threonylcarbamoyl group on adenosine at position 37 (t(6)A37) in tRNAs that read codons beginning with adenine. Is involved in the transfer of the threonylcarbamoyl moiety of threonylcarbamoyl-AMP (TC-AMP) to the N6 group of A37, together with TsaE and TsaB. TsaD likely plays a direct catalytic role in this reaction. This chain is tRNA N6-adenosine threonylcarbamoyltransferase, found in Mycoplasma mobile (strain ATCC 43663 / 163K / NCTC 11711) (Mesomycoplasma mobile).